Here is a 421-residue protein sequence, read N- to C-terminus: Signal recognition particle receptor FtsY (421 aa).

GTP-binding positions include 228-235 (GINGAGKT), 309-313 (DTAGR), and 373-376 (TKLD).

The protein belongs to the GTP-binding SRP family. FtsY subfamily. In terms of assembly, part of the signal recognition particle protein translocation system, which is composed of SRP and FtsY. SRP is a ribonucleoprotein composed of Ffh and a 4.5S RNA molecule.

The protein localises to the cell inner membrane. Its subcellular location is the cytoplasm. The catalysed reaction is GTP + H2O = GDP + phosphate + H(+). Its function is as follows. Involved in targeting and insertion of nascent membrane proteins into the cytoplasmic membrane. Acts as a receptor for the complex formed by the signal recognition particle (SRP) and the ribosome-nascent chain (RNC). Interaction with SRP-RNC leads to the transfer of the RNC complex to the Sec translocase for insertion into the membrane, the hydrolysis of GTP by both Ffh and FtsY, and the dissociation of the SRP-FtsY complex into the individual components. This Neisseria meningitidis serogroup B (strain ATCC BAA-335 / MC58) protein is Signal recognition particle receptor FtsY.